The sequence spans 172 residues: uncharacterized protein (172 aa).

This is an uncharacterized protein from Microplitis demolitor bracovirus (isolate Webb) (MdBV).